Reading from the N-terminus, the 610-residue chain is ESX-5 secretion system protein EccA5 (610 aa).

Position 357-364 (357-364) interacts with ATP; the sequence is GPPGTGKT.

This sequence belongs to the CbxX/CfxQ family. Part of the ESX-5 / type VII secretion system (T7SS), which is composed of cytosolic and membrane components.

It is found in the cytoplasm. In terms of biological role, part of an ESX-5 / type VII specialized secretion system (T7SS), which exports several proteins. EccA5 exhibits ATPase activity and may provide energy for the export of ESX-5 substrates. The protein is ESX-5 secretion system protein EccA5 of Mycobacterium bovis (strain ATCC BAA-935 / AF2122/97).